A 275-amino-acid chain; its full sequence is 5'-nucleotidase SurE (275 aa).

Positions 12, 13, 44, and 102 each coordinate a divalent metal cation.

It belongs to the SurE nucleotidase family. It depends on a divalent metal cation as a cofactor.

It localises to the cytoplasm. The catalysed reaction is a ribonucleoside 5'-phosphate + H2O = a ribonucleoside + phosphate. Its function is as follows. Nucleotidase that shows phosphatase activity on nucleoside 5'-monophosphates. In Synechococcus sp. (strain RCC307), this protein is 5'-nucleotidase SurE.